A 241-amino-acid chain; its full sequence is Small ribosomal subunit protein uS2 (241 aa).

It belongs to the universal ribosomal protein uS2 family.

This chain is Small ribosomal subunit protein uS2, found in Escherichia coli O127:H6 (strain E2348/69 / EPEC).